Reading from the N-terminus, the 335-residue chain is Holliday junction branch migration complex subunit RuvB (335 aa).

Positions 1–181 are large ATPase domain (RuvB-L); that stretch reads MDRIVEIEKY…FGMQFRLEFY (181 aa). ATP-binding positions include Leu20, Arg21, Gly62, Lys65, Thr66, Thr67, 128–130, Arg171, Tyr181, and Arg218; that span reads EDY. Thr66 lines the Mg(2+) pocket. The segment at 182-252 is small ATPAse domain (RuvB-S); the sequence is KDSELALILQ…RANEALNSLG (71 aa). The head domain (RuvB-H) stretch occupies residues 255 to 335; the sequence is ELGFDAMDLR…LNYEKTLFEE (81 aa). Residues Arg309 and Arg314 each coordinate DNA.

This sequence belongs to the RuvB family. As to quaternary structure, homohexamer. Forms an RuvA(8)-RuvB(12)-Holliday junction (HJ) complex. HJ DNA is sandwiched between 2 RuvA tetramers; dsDNA enters through RuvA and exits via RuvB. An RuvB hexamer assembles on each DNA strand where it exits the tetramer. Each RuvB hexamer is contacted by two RuvA subunits (via domain III) on 2 adjacent RuvB subunits; this complex drives branch migration. In the full resolvosome a probable DNA-RuvA(4)-RuvB(12)-RuvC(2) complex forms which resolves the HJ.

It is found in the cytoplasm. The catalysed reaction is ATP + H2O = ADP + phosphate + H(+). In terms of biological role, the RuvA-RuvB-RuvC complex processes Holliday junction (HJ) DNA during genetic recombination and DNA repair, while the RuvA-RuvB complex plays an important role in the rescue of blocked DNA replication forks via replication fork reversal (RFR). RuvA specifically binds to HJ cruciform DNA, conferring on it an open structure. The RuvB hexamer acts as an ATP-dependent pump, pulling dsDNA into and through the RuvAB complex. RuvB forms 2 homohexamers on either side of HJ DNA bound by 1 or 2 RuvA tetramers; 4 subunits per hexamer contact DNA at a time. Coordinated motions by a converter formed by DNA-disengaged RuvB subunits stimulates ATP hydrolysis and nucleotide exchange. Immobilization of the converter enables RuvB to convert the ATP-contained energy into a lever motion, pulling 2 nucleotides of DNA out of the RuvA tetramer per ATP hydrolyzed, thus driving DNA branch migration. The RuvB motors rotate together with the DNA substrate, which together with the progressing nucleotide cycle form the mechanistic basis for DNA recombination by continuous HJ branch migration. Branch migration allows RuvC to scan DNA until it finds its consensus sequence, where it cleaves and resolves cruciform DNA. This is Holliday junction branch migration complex subunit RuvB from Campylobacter jejuni subsp. doylei (strain ATCC BAA-1458 / RM4099 / 269.97).